The following is a 425-amino-acid chain: Serine--tRNA ligase (425 aa).

232 to 234 is an L-serine binding site; the sequence is TSE. ATP is bound by residues 263 to 265 and V279; that span reads RRE. E286 provides a ligand contact to L-serine. Residue 350–353 participates in ATP binding; the sequence is EVVS. T387 provides a ligand contact to L-serine.

It belongs to the class-II aminoacyl-tRNA synthetase family. Type-1 seryl-tRNA synthetase subfamily. In terms of assembly, homodimer. The tRNA molecule binds across the dimer.

It is found in the cytoplasm. The catalysed reaction is tRNA(Ser) + L-serine + ATP = L-seryl-tRNA(Ser) + AMP + diphosphate + H(+). The enzyme catalyses tRNA(Sec) + L-serine + ATP = L-seryl-tRNA(Sec) + AMP + diphosphate + H(+). Its pathway is aminoacyl-tRNA biosynthesis; selenocysteinyl-tRNA(Sec) biosynthesis; L-seryl-tRNA(Sec) from L-serine and tRNA(Sec): step 1/1. In terms of biological role, catalyzes the attachment of serine to tRNA(Ser). Is also able to aminoacylate tRNA(Sec) with serine, to form the misacylated tRNA L-seryl-tRNA(Sec), which will be further converted into selenocysteinyl-tRNA(Sec). This chain is Serine--tRNA ligase, found in Methanocella arvoryzae (strain DSM 22066 / NBRC 105507 / MRE50).